The primary structure comprises 118 residues: Melanoma antigen recognized by T-cells 1 (118 aa).

Residues 27–47 form a helical membrane-spanning segment; it reads AAGIGILTVILGVLLLIGCWY. Topologically, residues 48–118 are cytoplasmic; sequence CRRRNGYRAL…AEQSPPPYSP (71 aa). The interval 78–118 is disordered; that stretch reads GFDHRDSKVSLQEKNCEPVVPNAPPAYEKLSAEQSPPPYSP. Phosphoserine is present on serine 108.

As to quaternary structure, interacts with PMEL. Interacts with GPR143. Post-translationally, acylated. As to expression, expression is restricted to melanoma and melanocyte cell lines and retina.

It localises to the endoplasmic reticulum membrane. The protein localises to the golgi apparatus. It is found in the trans-Golgi network membrane. Its subcellular location is the melanosome. Functionally, involved in melanosome biogenesis by ensuring the stability of GPR143. Plays a vital role in the expression, stability, trafficking, and processing of melanocyte protein PMEL, which is critical to the formation of stage II melanosomes. This is Melanoma antigen recognized by T-cells 1 (MLANA) from Homo sapiens (Human).